Consider the following 236-residue polypeptide: Phosphoribosylaminoimidazole-succinocarboxamide synthase (236 aa).

This sequence belongs to the SAICAR synthetase family.

It carries out the reaction 5-amino-1-(5-phospho-D-ribosyl)imidazole-4-carboxylate + L-aspartate + ATP = (2S)-2-[5-amino-1-(5-phospho-beta-D-ribosyl)imidazole-4-carboxamido]succinate + ADP + phosphate + 2 H(+). The protein operates within purine metabolism; IMP biosynthesis via de novo pathway; 5-amino-1-(5-phospho-D-ribosyl)imidazole-4-carboxamide from 5-amino-1-(5-phospho-D-ribosyl)imidazole-4-carboxylate: step 1/2. In Rickettsia typhi (strain ATCC VR-144 / Wilmington), this protein is Phosphoribosylaminoimidazole-succinocarboxamide synthase.